The primary structure comprises 48 residues: uncharacterized protein (48 aa).

This sequence belongs to the ELIP/psbS family.

It localises to the plastid. Its subcellular location is the chloroplast. In terms of biological role, possible role in chlorophyll and/or carotenoid binding. This is an uncharacterized protein from Porphyra purpurea (Red seaweed).